A 94-amino-acid chain; its full sequence is Large ribosomal subunit protein bL25 (94 aa).

Belongs to the bacterial ribosomal protein bL25 family. In terms of assembly, part of the 50S ribosomal subunit; part of the 5S rRNA/L5/L18/L25 subcomplex. Contacts the 5S rRNA. Binds to the 5S rRNA independently of L5 and L18.

This is one of the proteins that binds to the 5S RNA in the ribosome where it forms part of the central protuberance. The chain is Large ribosomal subunit protein bL25 from Escherichia coli (strain K12 / DH10B).